A 199-amino-acid polypeptide reads, in one-letter code: NAD(P)H dehydrogenase (quinone) (199 aa).

Positions 4-190 (VLVLYYSAYG…GGARYQGKVI (187 aa)) constitute a Flavodoxin-like domain. Residues 10-15 (SAYGHI) and 78-80 (TRF) each bind FMN. Y12 contacts NAD(+). Position 98 (W98) interacts with substrate. Residues 113-119 (STASQHG) and H134 contribute to the FMN site.

This sequence belongs to the WrbA family. It depends on FMN as a cofactor.

It catalyses the reaction a quinone + NADH + H(+) = a quinol + NAD(+). It carries out the reaction a quinone + NADPH + H(+) = a quinol + NADP(+). This chain is NAD(P)H dehydrogenase (quinone), found in Rhodopseudomonas palustris (strain BisB18).